The following is a 314-amino-acid chain: Ferrochelatase (314 aa).

2 residues coordinate Fe cation: histidine 184 and glutamate 259.

The protein belongs to the ferrochelatase family.

The protein resides in the cytoplasm. It catalyses the reaction heme b + 2 H(+) = protoporphyrin IX + Fe(2+). It participates in porphyrin-containing compound metabolism; protoheme biosynthesis; protoheme from protoporphyrin-IX: step 1/1. In terms of biological role, catalyzes the ferrous insertion into protoporphyrin IX. In Chlamydia trachomatis serovar D (strain ATCC VR-885 / DSM 19411 / UW-3/Cx), this protein is Ferrochelatase.